Reading from the N-terminus, the 859-residue chain is Volume-regulated anion channel subunit LRRC8D (859 aa).

At 1–22 (MFTLAEVASLNDIQPTYRILKP) the chain is on the cytoplasmic side. Residues 23–48 (WWDVFMDYLAVVMLMVAIFAGTMQLT) traverse the membrane as a helical segment. Residues 49–164 (KDQVVCLPVL…YHLALPWYSK (116 aa)) are Extracellular-facing. A disulfide bridge links cysteine 54 with cysteine 355. The disordered stretch occupies residues 110-138 (IPLQATHPHAESTLPNQEAKKEKRDPTGR). Over residues 127–138 (EAKKEKRDPTGR) the composition is skewed to basic and acidic residues. The helical transmembrane segment at 165 to 183 (YFPYLALIHTIILMVSSNF) threads the bilayer. Topologically, residues 184 to 309 (WFKYPKTCSK…EDSDLIYKLY (126 aa)) are cytoplasmic. The interval 222-252 (SEENKQRITGAQTLPKHVSTSSDEGSPSAST) is disordered. Residues 228-252 (RITGAQTLPKHVSTSSDEGSPSAST) are compositionally biased toward polar residues. Residues serine 242, serine 243, and serine 247 each carry the phosphoserine modification. Residues 310 to 331 (VVQTLIKTAKFIFILCYTANFV) form a helical membrane-spanning segment. Residues 332–361 (NAISFEHVCKPKVEHLTGYEVFECTHNMAY) are Extracellular-facing. A helical membrane pass occupies residues 362 to 387 (MLKKLLISYISIICVYGFICLYTLFW). Over 388–859 (LFRIPLKEYS…DVNVPFANGI (472 aa)) the chain is Cytoplasmic. LRR repeat units lie at residues 515-535 (NLQELHLCHCPAKVEQTAFSF), 539-560 (HLRCLHVKFTDVAEIPAWVYLL), 562-583 (NLRELYLIGNLNSENNKMIGLE), 590-610 (HLKILHVKSNLTKVPSNITDV), 613-633 (HLTKLVIHNDGTKLLVLNSLK), 637-658 (NVAELELQNCELERIPHAIFSL), 660-681 (NLQELDLKSNNIRTIEEIISFQ), 685-706 (RLTCLKLWHNKIVAIPPSITHV), 708-729 (NLESLYFSNNKLESLPTAVFSL), 731-752 (KLRCLDVSYNNISTIPIEIGLL), 754-775 (NLQHLHITGNKVDILPKQLFKC), 777-798 (KLRTLNLGQNCIASLPEKISQL), and 800-821 (QLTQLELKGNCLDRLPAQLGQC).

This sequence belongs to the LRRC8 family. In terms of assembly, heterohexamer; oligomerizes with other LRRC8 proteins (LRRC8A, LRRC8B, LRRC8C and/or LRRC8E) to form a heterohexamer. In vivo, the subunit composition may depend primarily on expression levels, and heterooligomeric channels containing various proportions of the different LRRC8 proteins may coexist. As to expression, expressed in pancreatic beta cells. Also expressed in glucagon-secreting pancreatic alpha cells.

It is found in the cell membrane. The protein resides in the endoplasmic reticulum membrane. It carries out the reaction chloride(in) = chloride(out). The enzyme catalyses iodide(out) = iodide(in). It catalyses the reaction taurine(out) = taurine(in). Functionally, non-essential component of the volume-regulated anion channel (VRAC, also named VSOAC channel), an anion channel required to maintain a constant cell volume in response to extracellular or intracellular osmotic changes. The VRAC channel conducts iodide better than chloride and can also conduct organic osmolytes like taurine. Plays a redundant role in the efflux of amino acids, such as aspartate, in response to osmotic stress family member (LRRC8B, LRRC8C, LRRC8D or LRRC8E); channel characteristics depend on the precise subunit composition. Also acts as a regulator of glucose-sensing in pancreatic beta cells: VRAC currents, generated in response to hypotonicity- or glucose-induced beta cell swelling, depolarize cells, thereby causing electrical excitation, leading to increase glucose sensitivity and insulin secretion. VRAC channels containing LRRC8D inhibit transport of immunoreactive cyclic dinucleotide GMP-AMP (2'-3'-cGAMP), an immune messenger produced in response to DNA virus in the cytosol. The sequence is that of Volume-regulated anion channel subunit LRRC8D from Mus musculus (Mouse).